A 350-amino-acid chain; its full sequence is UPF0284 protein MJ1598 (350 aa).

Belongs to the UPF0284 family.

This chain is UPF0284 protein MJ1598, found in Methanocaldococcus jannaschii (strain ATCC 43067 / DSM 2661 / JAL-1 / JCM 10045 / NBRC 100440) (Methanococcus jannaschii).